Reading from the N-terminus, the 428-residue chain is Cyclin-B1-1 (428 aa).

This sequence belongs to the cyclin family. Cyclin AB subfamily. As to quaternary structure, interacts with FZR2/CCS52A1, FZR1/CCS52A2 and FZR3/CCS52B. In terms of tissue distribution, expressed in root tip, lateral root apex, shoot apex, leaf primordia, axillary buds, stamen and petal primordia, ovules and developing embryo.

Its subcellular location is the nucleus. The protein is Cyclin-B1-1 (CYCB1-1) of Arabidopsis thaliana (Mouse-ear cress).